The sequence spans 625 residues: MVSLSLRGARRTAKDAASLPFLSWTLSLLALNPLLVSAKSAADYYVRSLPGAPEGPLLKMHAGHIEVDPENHGNLFFWHFQNRHIANRQRTVIWLNGGPGCSSMDGALMEVGPYRLKDNSTLEYNEGSWDEFGNLLFVDQPVGTGFSYVNGNQYLHEMDEMAAHFITFLENWFDIFPEYERDDIYIAGESFAGQHIPYIAKAIQERNEKAQMKPKWSLRGLLIGNGWISPKDQYPSYLTFAYEEGLITKDSRTAKNLEVLQSVCESRLEAGKNKIHLDDCEKVLSEMLTKTMDVSKNECINSYDIRLRDEAPACGMNWPPELTHMNYYLRQPELISALNINPEKKSGWMECSNAVSSTFRTQKSVPSVQLLPGLIESGIPILLFSGDKDLICNHVGTEELINNMKWNGGTGFETSPGVWAPRHDWTFEGEPAGIYQYARNLTYVLFYNASHMVPYDLPRQSRDMLDRFMQVDIASIGGSPADSRIDGEKLPQTSVGGHPNSTAAEEQEKKKMKEAEWKAYAKSGEAVLVVVIIGVIVWGFFIWRSRRHHRGYRSVYNKNMSGSSVLERFHSKRSGADMEAGDFDEAELDDLHSPGLDREHYAVGDDSDDEQQHQRQGSRPEGGQS.

The signal sequence occupies residues 1–38; it reads MVSLSLRGARRTAKDAASLPFLSWTLSLLALNPLLVSA. The Lumenal segment spans residues 39-522; sequence KSAADYYVRS…KEAEWKAYAK (484 aa). N-linked (GlcNAc...) asparagine glycosylation occurs at asparagine 119. Catalysis depends on residues serine 190 and aspartate 389. N-linked (GlcNAc...) asparagine glycans are attached at residues asparagine 440 and asparagine 448. Histidine 451 is an active-site residue. The disordered stretch occupies residues 479-510; the sequence is SPADSRIDGEKLPQTSVGGHPNSTAAEEQEKK. Residues 491-502 show a composition bias toward polar residues; the sequence is PQTSVGGHPNST. N-linked (GlcNAc...) asparagine glycosylation is present at asparagine 500. Residues 523–543 form a helical membrane-spanning segment; it reads SGEAVLVVVIIGVIVWGFFIW. The Cytoplasmic segment spans residues 544 to 625; it reads RSRRHHRGYR…QGSRPEGGQS (82 aa). Residues 588–625 form a disordered region; the sequence is LDDLHSPGLDREHYAVGDDSDDEQQHQRQGSRPEGGQS. Residues 589–603 show a composition bias toward basic and acidic residues; it reads DDLHSPGLDREHYAV.

It belongs to the peptidase S10 family.

It localises to the golgi apparatus. Its subcellular location is the trans-Golgi network membrane. It carries out the reaction Preferential release of a C-terminal arginine or lysine residue.. Its function is as follows. Protease with a carboxypeptidase B-like function involved in the C-terminal processing of the lysine and arginine residues from protein precursors. Promotes cell fusion and is involved in the programmed cell death. This Aspergillus terreus (strain NIH 2624 / FGSC A1156) protein is Pheromone-processing carboxypeptidase kex1 (kex1).